Reading from the N-terminus, the 118-residue chain is Basic leucine zipper transcriptional factor ATF-like 3 (118 aa).

The disordered stretch occupies residues 1–69 (MSQGPPAVSV…HESLEQENSV (69 aa)). 2 positions are modified to phosphoserine: Ser2 and Ser24. Residues 28 to 91 (DDRKVRRREK…RHLSEVLKEH (64 aa)) form the bZIP domain. The interval 30–55 (RKVRRREKNRVAAQRSRKKQTQKADK) is basic motif. A compositionally biased stretch (basic and acidic residues) spans 51–69 (QKADKLHEEHESLEQENSV). Residues 56-84 (LHEEHESLEQENSVLRREISKLKEELRHL) are leucine-zipper.

The protein belongs to the bZIP family. In terms of assembly, heterodimer; heterodimerizes with JUN family proteins. Interacts with JUN. In terms of tissue distribution, highly expressed in CD8-alpha(+) classical dendritic cells (cDCs), with low to absent expression in other immune cells and non-immune tissues.

The protein localises to the nucleus. AP-1 family transcription factor that controls the differentiation of CD8(+) thymic conventional dendritic cells in the immune system. Acts via the formation of a heterodimer with JUN family proteins that recognizes and binds DNA sequence 5'-TGA[CG]TCA-3' and regulates expression of target genes. Required for development of CD8-alpha(+) classical dendritic cells (cDCs) and related CD103(+) dendritic cells that cross-present antigens to CD8 T-cells and produce interleukin-12 (IL12) in response to pathogens. In Mus musculus (Mouse), this protein is Basic leucine zipper transcriptional factor ATF-like 3 (Batf3).